The following is a 327-amino-acid chain: Short chain isoprenyl diphosphate synthase (327 aa).

Residues K48, R51, and H80 each coordinate isopentenyl diphosphate. Positions 87 and 91 each coordinate Mg(2+). R96 contributes to the an all-trans-polyprenyl diphosphate binding site. R97 serves as a coordination point for isopentenyl diphosphate. Positions 176, 177, 214, 231, and 241 each coordinate an all-trans-polyprenyl diphosphate.

Belongs to the FPP/GGPP synthase family. In terms of assembly, homodimer. The cofactor is Mg(2+).

It localises to the cytoplasm. The sequence is that of Short chain isoprenyl diphosphate synthase (idsA) from Methanocaldococcus jannaschii (strain ATCC 43067 / DSM 2661 / JAL-1 / JCM 10045 / NBRC 100440) (Methanococcus jannaschii).